The chain runs to 868 residues: Probable beta-glucosidase F (868 aa).

The first 20 residues, 1–20, serve as a signal peptide directing secretion; that stretch reads MAHRWLILALVAAAAPRALA. Positions 21–40 are disordered; that stretch reads SPGPSLNERQSDDEPFSPPY. 3 N-linked (GlcNAc...) asparagine glycosylation sites follow: Asn65, Asn73, and Asn257. Asp285 is an active-site residue. N-linked (GlcNAc...) asparagine glycans are attached at residues Asn328, Asn360, Asn395, Asn421, and Asn726. The segment at 731-752 is disordered; sequence YPYPDGYSTDPQPPPRAGGAEG.

Belongs to the glycosyl hydrolase 3 family.

The protein resides in the secreted. It carries out the reaction Hydrolysis of terminal, non-reducing beta-D-glucosyl residues with release of beta-D-glucose.. It participates in glycan metabolism; cellulose degradation. Functionally, beta-glucosidases are one of a number of cellulolytic enzymes involved in the degradation of cellulosic biomass. Catalyzes the last step releasing glucose from the inhibitory cellobiose. In Emericella nidulans (strain FGSC A4 / ATCC 38163 / CBS 112.46 / NRRL 194 / M139) (Aspergillus nidulans), this protein is Probable beta-glucosidase F (bglF).